A 344-amino-acid polypeptide reads, in one-letter code: Nicotinate-nucleotide--dimethylbenzimidazole phosphoribosyltransferase (344 aa).

Glu305 (proton acceptor) is an active-site residue.

This sequence belongs to the CobT family.

It carries out the reaction 5,6-dimethylbenzimidazole + nicotinate beta-D-ribonucleotide = alpha-ribazole 5'-phosphate + nicotinate + H(+). It functions in the pathway nucleoside biosynthesis; alpha-ribazole biosynthesis; alpha-ribazole from 5,6-dimethylbenzimidazole: step 1/2. Catalyzes the synthesis of alpha-ribazole-5'-phosphate from nicotinate mononucleotide (NAMN) and 5,6-dimethylbenzimidazole (DMB). The protein is Nicotinate-nucleotide--dimethylbenzimidazole phosphoribosyltransferase of Agrobacterium fabrum (strain C58 / ATCC 33970) (Agrobacterium tumefaciens (strain C58)).